Here is a 207-residue protein sequence, read N- to C-terminus: Large ribosomal subunit protein uL4 (207 aa).

Residues Lys48 to Gly70 are disordered.

Belongs to the universal ribosomal protein uL4 family. In terms of assembly, part of the 50S ribosomal subunit.

In terms of biological role, one of the primary rRNA binding proteins, this protein initially binds near the 5'-end of the 23S rRNA. It is important during the early stages of 50S assembly. It makes multiple contacts with different domains of the 23S rRNA in the assembled 50S subunit and ribosome. Forms part of the polypeptide exit tunnel. This chain is Large ribosomal subunit protein uL4, found in Francisella tularensis subsp. holarctica (strain FTNF002-00 / FTA).